The chain runs to 268 residues: Thiazole synthase (268 aa).

Lysine 111 functions as the Schiff-base intermediate with DXP in the catalytic mechanism. 1-deoxy-D-xylulose 5-phosphate is bound by residues glycine 172, alanine 198 to glycine 199, and asparagine 220 to threonine 221.

The protein belongs to the ThiG family. Homotetramer. Forms heterodimers with either ThiH or ThiS.

The protein resides in the cytoplasm. The catalysed reaction is [ThiS sulfur-carrier protein]-C-terminal-Gly-aminoethanethioate + 2-iminoacetate + 1-deoxy-D-xylulose 5-phosphate = [ThiS sulfur-carrier protein]-C-terminal Gly-Gly + 2-[(2R,5Z)-2-carboxy-4-methylthiazol-5(2H)-ylidene]ethyl phosphate + 2 H2O + H(+). The protein operates within cofactor biosynthesis; thiamine diphosphate biosynthesis. In terms of biological role, catalyzes the rearrangement of 1-deoxy-D-xylulose 5-phosphate (DXP) to produce the thiazole phosphate moiety of thiamine. Sulfur is provided by the thiocarboxylate moiety of the carrier protein ThiS. In vitro, sulfur can be provided by H(2)S. In Caulobacter sp. (strain K31), this protein is Thiazole synthase.